A 29-amino-acid chain; its full sequence is Toxin Bcg III 15.67 (29 aa).

Positions 2–29 (QGTACTGEHAHSFCLNGGTCRHIQQLGE) constitute an EGF-like domain. A disulfide bridge links C6 with C21.

The protein resides in the secreted. Its subcellular location is the nematocyst. In terms of biological role, has both toxic and EGF activity. In Bunodosoma cangicum (Sea anemone), this protein is Toxin Bcg III 15.67.